The primary structure comprises 576 residues: Keratin, type II cytoskeletal 5 (576 aa).

The segment at 1–163 (MSRQSSVSFR…DPTIQRVRTE (163 aa)) is head. S5, S8, S16, and S21 each carry phosphoserine. Position 24 is a phosphothreonine; by CDK1 (T24). S26, S36, S46, S60, S67, S71, S74, and S78 each carry phosphoserine. Position 147 is a phosphothreonine; by CDK1 (T147). Position 162 is a phosphothreonine; by AURKB (T162). A coil 1A region spans residues 164–199 (EREQIKTLNNKFASFIDKVRFLEQQNKVLDTKWTLL). One can recognise an IF rod domain in the interval 164–477 (EREQIKTLNN…KLLEGEECRL (314 aa)). Positions 200-218 (QEQGTKTIKQNLDPLFEQY) are linker 1. The tract at residues 219–311 (INNLRRQLDG…FFDAELSQMQ (93 aa)) is coil 1B. The tract at residues 312-334 (THVSDTSVVLSMDNNRSLDLDSI) is linker 12. Positions 335–473 (IAEVKAQYED…ATYRKLLEGE (139 aa)) are coil 2. The segment at 474–576 (ECRLSGEGVG…TSSSRRSFKS (103 aa)) is tail. R527 is modified (omega-N-methylarginine). The span at 540 to 557 (GFSASSGQGGGFSSGGGS) shows a compositional bias: gly residues. The segment at 540–576 (GFSASSGQGGGFSSGGGSSSSVKFVSTTSSSRRSFKS) is disordered. Low complexity predominate over residues 558–576 (SSSVKFVSTTSSSRRSFKS).

The protein belongs to the intermediate filament family. In terms of assembly, heterodimer of a type I and a type II keratin. Heterodimer with type I keratin KRT25 leading to the formation of keratin intermediate filament (KIF) network. Forms a heterodimer (via 2B domains) with KRT14 (via 2B domains). Interacts with TCHP. Interacts with EPPK1. Interacts with AMELX. Interacts with PKP1 (via N-terminus) and PKP2. Phosphorylated by CDK1, AURKB and Rho-kinase, phosphorylation is regulated by the cell cycle. Thr-24 phosphorylation, mediated by CDK1, peaks during prometaphase or metaphase cells with phosphorylated filamentous structures evident throughout the cytoplasm during early mitosis. CDK1 phosphorylates Thr-24 in mitotic cells at the site of injury. In terms of processing, O-glycosylated. In terms of tissue distribution, expressed in the epidermis (at protein level) and testis (within pachytene spermatocytes).

It is found in the cytoplasm. Required for the formation of keratin intermediate filaments in the basal epidermis and maintenance of the skin barrier in response to mechanical stress. Regulates the recruitment of Langerhans cells to the epidermis, potentially by modulation of the abundance of macrophage chemotactic cytokines, macrophage inflammatory cytokines and CTNND1 localization in keratinocytes. This Rattus norvegicus (Rat) protein is Keratin, type II cytoskeletal 5.